A 350-amino-acid chain; its full sequence is Biotin synthase (350 aa).

Positions 38–262 constitute a Radical SAM core domain; the sequence is RQVQVSTLLS…MMPTSYVRLS (225 aa). Residues Cys-53, Cys-57, and Cys-60 each contribute to the [4Fe-4S] cluster site. [2Fe-2S] cluster is bound by residues Cys-97, Cys-128, Cys-188, and Arg-260.

This sequence belongs to the radical SAM superfamily. Biotin synthase family. Homodimer. [4Fe-4S] cluster serves as cofactor. The cofactor is [2Fe-2S] cluster.

It carries out the reaction (4R,5S)-dethiobiotin + (sulfur carrier)-SH + 2 reduced [2Fe-2S]-[ferredoxin] + 2 S-adenosyl-L-methionine = (sulfur carrier)-H + biotin + 2 5'-deoxyadenosine + 2 L-methionine + 2 oxidized [2Fe-2S]-[ferredoxin]. The protein operates within cofactor biosynthesis; biotin biosynthesis; biotin from 7,8-diaminononanoate: step 2/2. Functionally, catalyzes the conversion of dethiobiotin (DTB) to biotin by the insertion of a sulfur atom into dethiobiotin via a radical-based mechanism. The sequence is that of Biotin synthase from Yersinia enterocolitica serotype O:8 / biotype 1B (strain NCTC 13174 / 8081).